The primary structure comprises 773 residues: DNA polymerase (773 aa).

2 disulfide bridges follow: Cys428–Cys442 and Cys506–Cys509.

This sequence belongs to the DNA polymerase type-B family.

It carries out the reaction DNA(n) + a 2'-deoxyribonucleoside 5'-triphosphate = DNA(n+1) + diphosphate. Its function is as follows. In addition to polymerase activity, this DNA polymerase exhibits 3' to 5' exonuclease activity. The protein is DNA polymerase (pol) of Thermococcus gorgonarius.